We begin with the raw amino-acid sequence, 1486 residues long: MIERGKFRSLTLINWNGFFARTFDLDELVTTLSGGNGAGKSTTMAAFVTALIPDLTLLHFRNTTEAGATSGSRDKGLHGKLKAGVCYSMLDTINSRHQRVVVGVRLQQVAGRDRKVDIKPFAIQGLPMSVQPTQLVTETLNERQARVLPLNELKDKLEAMEGVQFKQFNSITDYHSLMFDLGIIARRLRSASDRSKFYRLIEASLYGGISSAITRSLRDYLLPENSGVRKAFQDMEAALRENRMTLEAIRVTQSDRDLFKHLISEATNYVAADYMRHANERRVHLDKALEFRRELHTSRQQLAAEQYKHVDMARELAEHNGAEGDLEADYQAASDHLNLVQTALRQQEKIERYEADLDELQVRLEEQNEVVAEAIERQEENEARAEAAELEVDELKSQLADYQQALDVQQTRAIQYNQAIAALNRAKELCHLPDLTADSAAEWLETFQAKELEATEKMLSLEQKMSMAQTAHSQFEQAYQLVVAINGPLARNEAWDVARELLREGVDQRHLAEQVQPLRMRLSELEQRLREQQEAERLLADFCKRQGKNFDIDELEALHQELEARIASLSDSVSNAREERMALRQEQEQLQSRIQSLMQRAPVWLAAQNSLNQLSEQCGEAFSSSQDVTEYLQQLLEREREAIVERDEVGARKNAVDEEIERLSQPGGSEDQRLNALAERFGGVLLSEIYDDVSLEDAPYFSALYGPSRHAIVVPDLSQVTEHLEGLTDCPEDLYLIEGDPQSFDDSVFSVDELEKAVVVKIADRQWRYSRFPEVPLFGRAARESRIESLHAEREVLSERFATLSFDVQKTQRLHQAFSRFIGSHLAVAFESDPEAEIRQLNSRRVELERALSNHENDNQQQRIQFEQAKEGVTALNRILPRLNLLADDSLADRVDEIRERLDEAQEAARFVQQFGNQLAKLEPIVSVLQSDPEQFEQLKEDYAYSQQMQRDARQQAFALTEVVQRRAHFSYSDSAEMLSGNSDLNEKLRERLEQAEAERTRAREALRGHAAQLSQYNQVLASLKSSYDTKKELLNDLQRELQDIGVRADSGAEERARIRRDELHAQLSNNRSRRNQLEKALTFCEAEMDNLTRKLRKLERDYFEMREQVVTAKAGWCAVMRMVKDNGVERRLHRRELAYLSADDLRSMSDKALGALRLAVADNEHLRDVLRLSEDPKRPERKIQFFVAVYQHLRERIRQDIIRTDDPVEAIEQMEIELSRLTEELTSREQKLAISSRSVANIIRKTIQREQNRIRMLNQGLQNVSFGQVNSVRLNVNVRETHAMLLDVLSEQHEQHQDLFNSNRLTFSEALAKLYQRLNPQIDMGQRTPQTIGEELLDYRNYLEMEVEVNRGSDGWLRAESGALSTGEAIGTGMSILVMVVQSWEDESRRLRGKDISPCRLLFLDEAARLDARSIATLFELCERLQMQLIIAAPENISPEKGTTYKLVRKVFQNTEHVHVVGLRGFTPQLPETLPGTVDAPSEAS.

34-41 (GGNGAGKS) is an ATP binding site. 3 coiled-coil regions span residues 326–418 (LEAD…QYNQ), 444–480 (LETFQAKELEATEKMLSLEQKMSMAQTAHSQFEQAYQ), and 509–603 (RHLA…RAPV). The interval 666–783 (PGGSEDQRLN…EVPLFGRAAR (118 aa)) is flexible hinge. 3 coiled-coil regions span residues 835-923 (EAEI…AKLE), 977-1115 (EMLS…TAKA), and 1209-1266 (VEAI…QNVS).

The protein belongs to the SMC family. MukB subfamily. Homodimerization via its hinge domain. Binds to DNA via its C-terminal region. Interacts, and probably forms a ternary complex, with MukE and MukF via its C-terminal region. The complex formation is stimulated by calcium or magnesium. Interacts with tubulin-related protein FtsZ.

The protein localises to the cytoplasm. The protein resides in the nucleoid. Functionally, plays a central role in chromosome condensation, segregation and cell cycle progression. Functions as a homodimer, which is essential for chromosome partition. Involved in negative DNA supercoiling in vivo, and by this means organize and compact chromosomes. May achieve or facilitate chromosome segregation by condensation DNA from both sides of a centrally located replisome during cell division. This is Chromosome partition protein MukB from Escherichia fergusonii (strain ATCC 35469 / DSM 13698 / CCUG 18766 / IAM 14443 / JCM 21226 / LMG 7866 / NBRC 102419 / NCTC 12128 / CDC 0568-73).